Consider the following 480-residue polypeptide: Proline--tRNA ligase (480 aa).

It belongs to the class-II aminoacyl-tRNA synthetase family. ProS type 3 subfamily. As to quaternary structure, homodimer.

It localises to the cytoplasm. The catalysed reaction is tRNA(Pro) + L-proline + ATP = L-prolyl-tRNA(Pro) + AMP + diphosphate. Its function is as follows. Catalyzes the attachment of proline to tRNA(Pro) in a two-step reaction: proline is first activated by ATP to form Pro-AMP and then transferred to the acceptor end of tRNA(Pro). The sequence is that of Proline--tRNA ligase from Pyrococcus abyssi (strain GE5 / Orsay).